Consider the following 187-residue polypeptide: UPF0301 protein SO_3346 (187 aa).

This sequence belongs to the UPF0301 (AlgH) family.

The protein is UPF0301 protein SO_3346 of Shewanella oneidensis (strain ATCC 700550 / JCM 31522 / CIP 106686 / LMG 19005 / NCIMB 14063 / MR-1).